The following is a 151-amino-acid chain: Putative pre-16S rRNA nuclease (151 aa).

This sequence belongs to the YqgF nuclease family.

The protein resides in the cytoplasm. Functionally, could be a nuclease involved in processing of the 5'-end of pre-16S rRNA. This is Putative pre-16S rRNA nuclease from Myxococcus xanthus (strain DK1622).